Here is an 859-residue protein sequence, read N- to C-terminus: Leucine--tRNA ligase (859 aa).

The 'HIGH' region signature appears at 42–52; that stretch reads PYPSGKLHMGH. Residues 618-622 carry the 'KMSKS' region motif; that stretch reads KMSKS. K621 serves as a coordination point for ATP.

Belongs to the class-I aminoacyl-tRNA synthetase family.

Its subcellular location is the cytoplasm. The enzyme catalyses tRNA(Leu) + L-leucine + ATP = L-leucyl-tRNA(Leu) + AMP + diphosphate. The protein is Leucine--tRNA ligase of Buchnera aphidicola subsp. Acyrthosiphon pisum (strain APS) (Acyrthosiphon pisum symbiotic bacterium).